The primary structure comprises 388 residues: Cell adhesion molecule 4 (388 aa).

A signal peptide spans 1–20; the sequence is MGRARRFQWPLLLLWAAAAG. One can recognise an Ig-like V-type domain in the interval 21-119; the sequence is PGAGQEVQTE…DTHHQIATLT (99 aa). Residues 21–324 lie on the Extracellular side of the membrane; the sequence is PGAGQEVQTE…VEAQTSVPYA (304 aa). Asn-31 and Asn-67 each carry an N-linked (GlcNAc...) asparagine glycan. Cystine bridges form between Cys-44/Cys-104, Cys-145/Cys-199, and Cys-245/Cys-291. 2 consecutive Ig-like C2-type domains span residues 124–219 and 224–307; these read PENP…YVLD and PTAR…YVLV. Residue Asn-286 is glycosylated (N-linked (GlcNAc...) asparagine). Residues 325–345 form a helical membrane-spanning segment; it reads IVGGILALLVFLIICVLVGMV. The Cytoplasmic portion of the chain corresponds to 346–388; sequence WCSVRQKGSYLTHEASGLDEQGEAREAFLNGSDGHKRKEEFFI. Ser-361 carries the post-translational modification Phosphoserine.

The protein belongs to the nectin family. As to quaternary structure, monomer and homodimer. Post-translationally, N-glycosylated. Expressed in brain, prostate, brain, kidney and some other organs.

The protein resides in the membrane. In terms of biological role, involved in the cell-cell adhesion. Has calcium- and magnesium-independent cell-cell adhesion activity. May have tumor-suppressor activity. In Homo sapiens (Human), this protein is Cell adhesion molecule 4 (CADM4).